The following is a 421-amino-acid chain: Probable mitochondrial chaperone BCS1-A (421 aa).

At Met-1–Ser-10 the chain is on the mitochondrial intermembrane side. Residues Ile-11–Phe-31 traverse the membrane as a helical segment. Residues Lys-32–Asn-421 are Mitochondrial matrix-facing. Position 228 to 235 (Gly-228 to Ser-235) interacts with ATP.

The protein belongs to the AAA ATPase family. BCS1 subfamily.

Its subcellular location is the mitochondrion inner membrane. The enzyme catalyses ATP + H2O = ADP + phosphate + H(+). Its function is as follows. Chaperone necessary for the assembly of mitochondrial respiratory chain complex III. The chain is Probable mitochondrial chaperone BCS1-A (bcs1la) from Dictyostelium discoideum (Social amoeba).